Consider the following 200-residue polypeptide: NAD(P)H dehydrogenase (quinone) (200 aa).

One can recognise a Flavodoxin-like domain in the interval 4–191 (VLVLYYSSYG…DIARYQGKHV (188 aa)). FMN-binding positions include 10-15 (SSYGHV) and 79-81 (TRF). Tyrosine 12 serves as a coordination point for NAD(+). Substrate is bound at residue tryptophan 99. Residues 114–120 (STGTQHG) and histidine 135 contribute to the FMN site.

It belongs to the WrbA family. It depends on FMN as a cofactor.

The catalysed reaction is a quinone + NADH + H(+) = a quinol + NAD(+). The enzyme catalyses a quinone + NADPH + H(+) = a quinol + NADP(+). This is NAD(P)H dehydrogenase (quinone) from Burkholderia cenocepacia (strain HI2424).